We begin with the raw amino-acid sequence, 352 residues long: Septin-2B (352 aa).

Residues 33-305 (KGFEFTLMVV…ENFRSERLKK (273 aa)) enclose the Septin-type G domain. The segment at 43 to 50 (GESGLGKS) is G1 motif. Residues 43-50 (GESGLGKS), threonine 77, glycine 103, 182-190 (KADTLTLRE), glycine 240, and arginine 255 each bind GTP. The segment at 100 to 103 (DTPG) is G3 motif. The segment at 181–184 (AKAD) is G4 motif. The tract at residues 259 to 269 (WGVVEVENPEH) is important for dimerization.

The protein belongs to the TRAFAC class TrmE-Era-EngA-EngB-Septin-like GTPase superfamily. Septin GTPase family. Septins polymerize into heterooligomeric protein complexes that form filaments, and associate with cellular membranes, actin filaments and microtubules. GTPase activity is required for filament formation. Can form heterooligomers with other family members and form filaments. Interacts with wdpcp.

The protein resides in the cytoplasm. It localises to the cytoskeleton. It is found in the spindle. The protein localises to the cleavage furrow. Its subcellular location is the midbody. The protein resides in the cell projection. It localises to the cilium membrane. Filament-forming cytoskeletal GTPase. Required for normal organization of the actin cytoskeleton. Plays a role in the biogenesis of polarized columnar-shaped epithelium. Required for the progression through mitosis through regulation of chromosome congression. During anaphase, may be required for chromosome segregation and spindle elongation. Probably plays a role in ciliogenesis and collective cell movements including convergent extension during gastrulation. In cilia, required for the integrity of the diffusion barrier at the base of the primary cilium that prevents diffusion of transmembrane proteins between the cilia and plasma membranes. Controls cell shape and not polarization of cells during convergent extension. The chain is Septin-2B (sept2-b) from Xenopus laevis (African clawed frog).